The sequence spans 164 residues: Ubiquitin-fold modifier-conjugating enzyme 1 (164 aa).

Cysteine 116 (glycyl thioester intermediate) is an active-site residue.

The protein belongs to the ubiquitin-conjugating enzyme family. UFC1 subfamily.

Functionally, E2-like enzyme which forms an intermediate with UFM1 via a thioester linkage. This is Ubiquitin-fold modifier-conjugating enzyme 1 from Drosophila persimilis (Fruit fly).